The primary structure comprises 336 residues: Dihydroorotate dehydrogenase (quinone) (336 aa).

Residues 62-66 (AGLDK) and threonine 86 each bind FMN. Substrate is bound at residue lysine 66. 111-115 (NRMGF) provides a ligand contact to substrate. FMN contacts are provided by asparagine 139 and asparagine 172. Asparagine 172 contributes to the substrate binding site. Serine 175 serves as the catalytic Nucleophile. Substrate is bound at residue asparagine 177. Positions 217 and 245 each coordinate FMN. A substrate-binding site is contributed by 246–247 (NT). FMN-binding positions include glycine 268, glycine 297, and 318–319 (YS).

Belongs to the dihydroorotate dehydrogenase family. Type 2 subfamily. In terms of assembly, monomer. The cofactor is FMN.

Its subcellular location is the cell membrane. It carries out the reaction (S)-dihydroorotate + a quinone = orotate + a quinol. It participates in pyrimidine metabolism; UMP biosynthesis via de novo pathway; orotate from (S)-dihydroorotate (quinone route): step 1/1. In terms of biological role, catalyzes the conversion of dihydroorotate to orotate with quinone as electron acceptor. This chain is Dihydroorotate dehydrogenase (quinone), found in Vibrio vulnificus (strain CMCP6).